The chain runs to 216 residues: Probable GTP-binding protein EngB (216 aa).

In terms of domain architecture, EngB-type G spans E27–E201. Residues G35 to S42, G62 to L66, D80 to G83, T147 to D150, and F180 to S182 contribute to the GTP site. Mg(2+) contacts are provided by S42 and T64.

Belongs to the TRAFAC class TrmE-Era-EngA-EngB-Septin-like GTPase superfamily. EngB GTPase family. Mg(2+) is required as a cofactor.

In terms of biological role, necessary for normal cell division and for the maintenance of normal septation. The sequence is that of Probable GTP-binding protein EngB from Serratia proteamaculans (strain 568).